Here is a 1574-residue protein sequence, read N- to C-terminus: Plexin-C1 (1574 aa).

Positions 1 to 34 (MEVSRRKTPPRPPYPAAPLPLIAYLLALAAPARG) are cleaved as a signal peptide. Positions 35-452 (ADEPVWRSEQ…AGKEVRRIPV (418 aa)) constitute a Sema domain. Residues 35-950 (ADEPVWRSEQ…YVEQESVPST (916 aa)) are Extracellular-facing. Residues Cys64 and Cys87 are joined by a disulfide bond. Residues Asn86, Asn143, and Asn149 are each glycosylated (N-linked (GlcNAc...) asparagine). Cys156 and Cys194 are joined by a disulfide. Asn252 is a glycosylation site (N-linked (GlcNAc...) asparagine). A disulfide bond links Cys283 and Cys329. N-linked (GlcNAc...) asparagine glycans are attached at residues Asn386 and Asn407. 4 disulfide bridges follow: Cys455–Cys472, Cys461–Cys506, Cys464–Cys481, and Cys475–Cys487. N-linked (GlcNAc...) asparagine glycosylation is found at Asn694, Asn773, and Asn802. Residues 951–971 (WYFLIALPILLAIVIVVAVVV) form a helical membrane-spanning segment. Over 972–1574 (TRYKSKELSR…FDEKKKCKWM (603 aa)) the chain is Cytoplasmic. Ser984 bears the Phosphoserine mark.

This sequence belongs to the plexin family. In terms of assembly, monomer. Homodimer. Interacts with SEMA7A. Detected on dendritic cells, skin Langerhans cells and neutrophils (at protein level).

The protein resides in the membrane. In terms of biological role, receptor for SEMA7A, for vaccinia virus semaphorin A39R and for herpesvirus Sema protein. Binding of semaphorins triggers cellular responses leading to the rearrangement of the cytoskeleton and to secretion of IL6 and IL8. This is Plexin-C1 (Plxnc1) from Mus musculus (Mouse).